The following is a 717-amino-acid chain: Scinderin (717 aa).

The actin-severing stretch occupies residues 1–363 (MAPERHPPAF…DGFGKVYVTE (363 aa)). A Gelsolin-like 1 repeat occupies 28–108 (ELVPVPPSRH…IQGYESNEFV (81 aa)). A 1,2-diacyl-sn-glycero-3-phospho-(1D-myo-inositol-4,5-bisphosphate) is bound by residues 112 to 119 (KGGIKYKA) and 138 to 146 (RLLHIKGRR). Gelsolin-like repeat units lie at residues 148–220 (VRAT…PDEL), 265–340 (VVAE…TPIF), 408–483 (RVPV…PHLL), 526–590 (AEVD…EEFW), and 628–703 (IEEV…PPTF). The segment at 364–715 (RVAKIEQIEF…WFLAWDSNKW (352 aa)) is ca(2+)-dependent actin binding. Ca(2+)-binding residues include asparagine 538, aspartate 539, glutamate 562, aspartate 643, aspartate 644, and glutamate 666.

This sequence belongs to the villin/gelsolin family.

The protein resides in the cytoplasm. Its subcellular location is the cytoskeleton. The protein localises to the cell projection. It localises to the podosome. Ca(2+)-dependent actin filament-severing protein that has a regulatory function in exocytosis by affecting the organization of the microfilament network underneath the plasma membrane. In vitro, also has barbed end capping and nucleating activities in the presence of Ca(2+). Severing activity is inhibited by phosphatidylinositol 4,5-bis-phosphate (PIP2). Required for megakaryocyte differentiation, maturation, polyploidization and apoptosis with the release of platelet-like particles. Plays a role in osteoclastogenesis (OCG) and actin cytoskeletal organization in osteoclasts. Regulates chondrocyte proliferation and differentiation. Inhibits cell proliferation and tumorigenesis. Signaling is mediated by MAPK, p38 and JNK pathways. This is Scinderin (SCIN) from Gallus gallus (Chicken).